The chain runs to 161 residues: Allophycocyanin beta chain (161 aa).

Asn-71 carries the N4-methylasparagine modification. Cys-81 contributes to the (2R,3E)-phycocyanobilin binding site.

Belongs to the phycobiliprotein family. As to quaternary structure, heterodimer of an alpha and a beta chain. Post-translationally, contains one covalently linked phycocyanobilin chromophore.

The protein localises to the cellular thylakoid membrane. Light-harvesting photosynthetic bile pigment-protein from the phycobiliprotein complex. Allophycocyanin has a maximum absorption at approximately 650 nanometers. This chain is Allophycocyanin beta chain (apcB), found in Synechocystis sp. (strain PCC 6714) (Aphanocapsa sp. (strain PCC 6714)).